A 513-amino-acid chain; its full sequence is Calcium-dependent protein kinase 2 (513 aa).

The region spanning 65–323 is the Protein kinase domain; sequence YSFGKELGRG…SAQVLQHQWL (259 aa). ATP is bound by residues 71–79 and Lys-94; that span reads LGRGQFGVT. Asp-189 (proton acceptor) is an active-site residue. The interval 329–359 is autoinhibitory domain; that stretch reads ASDKPIDSAVLSRMKQFRAMNKLKKMALKVI. EF-hand domains are found at residues 366-401, 402-437, 438-473, and 478-508; these read EEIK…LGSK, LSEA…RHKL, ERDE…HEMG, and IREI…GMQQ. Positions 379, 381, 383, 385, 390, 415, 417, 419, 421, 426, 451, 453, 455, 462, 486, 488, 490, 492, and 497 each coordinate Ca(2+).

Belongs to the protein kinase superfamily. Ser/Thr protein kinase family. CDPK subfamily.

It carries out the reaction L-seryl-[protein] + ATP = O-phospho-L-seryl-[protein] + ADP + H(+). The catalysed reaction is L-threonyl-[protein] + ATP = O-phospho-L-threonyl-[protein] + ADP + H(+). Its activity is regulated as follows. Activated by calcium. Autophosphorylation may play an important role in the regulation of the kinase activity. Functionally, may play a role in signal transduction pathways that involve calcium as a second messenger. The sequence is that of Calcium-dependent protein kinase 2 (CPK2) from Zea mays (Maize).